An 80-amino-acid chain; its full sequence is Cytochrome c oxidase subunit 7A1, mitochondrial (80 aa).

The transit peptide at 1–21 directs the protein to the mitochondrion; it reads MRALRVSQALVRSFSSTARNR. Topologically, residues 22 to 46 are mitochondrial matrix; the sequence is FENRVAEKQKLFQEDNGLPVHLKGG. The chain crosses the membrane as a helical span at residues 47 to 75; sequence ATDNILYRVTMTLCLGGTLYSLYCLGWAS. The Mitochondrial intermembrane segment spans residues 76–80; that stretch reads FPHKK.

This sequence belongs to the cytochrome c oxidase VIIa family. In terms of assembly, component of the complex IV (CIV, cytochrome c oxidase), a multisubunit enzyme composed of 14 subunits. The complex is composed of a catalytic core of 3 subunits MT-CO1, MT-CO2 and MT-CO3, encoded in the mitochondrial DNA, and 11 supernumerary subunits COX4I1 (or COX4I2), COX5A, COX5B, COX6A2 (or COX6A1), COX6B1 (or COX6B2), COX6C, COX7A1 (or COX7A2), COX7B, COX7C, COX8B and NDUFA4, which are encoded in the nuclear genome. The complex exists as a monomer or a dimer and forms supercomplexes (SCs) in the inner mitochondrial membrane with NADH-ubiquinone oxidoreductase (complex I, CI) and ubiquinol-cytochrome c oxidoreductase (cytochrome b-c1 complex, complex III, CIII), resulting in different assemblies (supercomplex SCI(1)III(2)IV(1) and megacomplex MCI(2)III(2)IV(2)).

The protein resides in the mitochondrion inner membrane. It functions in the pathway energy metabolism; oxidative phosphorylation. Functionally, component of the mitochondrial respiratory complex IV (CIV, also named cytochrome c oxidase complex), the last enzyme in the mitochondrial electron transport chain which drives oxidative phosphorylation. The CIV complex is the component of the respiratory chain that catalyzes the reduction of oxygen to water. Acts as an assembly factor that specifically drives the homodimerization of CIV complexes, mediating the formation of mitochondrial respiratory supercomplexes (respirasomes) containing two CIV: supercomplxes with two molecules of CIV show improved activity. Despite being highly expressed in brown adipose tissue, not required for thermogenesis. The sequence is that of Cytochrome c oxidase subunit 7A1, mitochondrial (COX7A1) from Bos taurus (Bovine).